A 396-amino-acid chain; its full sequence is NAD(P)H oxidoreductase RTN4IP1, mitochondrial (396 aa).

The transit peptide at 1 to 40 directs the protein to the mitochondrion; the sequence is MGFLKTCVFRRNACTAVCFWRSQVVQKPSVRKISTTSPRS. Positions 52–393 constitute an Enoyl reductase (ER) domain; it reads GSNEVLRFTQ…RGHARGKTVI (342 aa). The NADPH site is built by serine 214, glycine 216, valine 217, serine 237, tyrosine 255, asparagine 276, leucine 300, alanine 341, phenylalanine 343, histidine 386, alanine 387, and arginine 388.

It belongs to the zinc-containing alcohol dehydrogenase family. Quinone oxidoreductase subfamily. In terms of assembly, interacts with RTN4, UQCRC1 and UQCRC2.

It localises to the mitochondrion matrix. Its subcellular location is the mitochondrion outer membrane. The enzyme catalyses a 3-demethylubiquinone + NADH + 2 H(+) = a 3-demethylubiquinol + NAD(+). It catalyses the reaction a 3-demethylubiquinone + NADPH + 2 H(+) = a 3-demethylubiquinol + NADP(+). The catalysed reaction is 3-demethylubiquinone-10 + NADH + 2 H(+) = 3-demethylubiquinol-10 + NAD(+). It carries out the reaction 3-demethylubiquinone-10 + NADPH + 2 H(+) = 3-demethylubiquinol-10 + NADP(+). It participates in cofactor biosynthesis; ubiquinone biosynthesis. In terms of biological role, NAD(P)H oxidoreductase involved in the ubiquinone biosynthetic pathway. Required for the O-methyltransferase activity of COQ3. Able to catalyze the oxidoreduction of 3-demethylubiquinone into 3-demethylubiquinol in vitro. However, it is unclear if 3-demethylubiquinone constitutes a substrate in vivo. May also play a role in the regulation of retinal ganglion cell (RGC) neurite outgrowth, and hence in the development of the inner retina and optic nerve. Appears to be a potent inhibitor of regeneration following spinal cord injury. The protein is NAD(P)H oxidoreductase RTN4IP1, mitochondrial (RTN4IP1) of Bos taurus (Bovine).